The following is a 183-amino-acid chain: Dual-action ribosomal maturation protein DarP (183 aa).

The interval 1 to 27 (MSSHSQEPVGEENFDDSEYDRPNKSQV) is disordered. Positions 9–18 (VGEENFDDSE) are enriched in acidic residues.

The protein belongs to the DarP family.

The protein localises to the cytoplasm. Functionally, member of a network of 50S ribosomal subunit biogenesis factors which assembles along the 30S-50S interface, preventing incorrect 23S rRNA structures from forming. Promotes peptidyl transferase center (PTC) maturation. In Bordetella pertussis (strain Tohama I / ATCC BAA-589 / NCTC 13251), this protein is Dual-action ribosomal maturation protein DarP.